The following is a 581-amino-acid chain: Frizzled-3 (581 aa).

The signal sequence occupies residues 1–19 (MYAASILILHLTWAVATIA). Over 20–237 (ANGAGHNGPV…TSSQKKTSET (218 aa)) the chain is Extracellular. The 122-residue stretch at 35–156 (PNGLQCQPIA…PEKHELCMQI (122 aa)) folds into the FZ domain. Disulfide bonds link cysteine 40-cysteine 101, cysteine 48-cysteine 94, cysteine 85-cysteine 123, cysteine 112-cysteine 153, and cysteine 116-cysteine 141. N-linked (GlcNAc...) asparagine glycosylation is present at asparagine 54. N-linked (GlcNAc...) asparagine glycosylation occurs at asparagine 206. Residues 238–258 (LILGLSAVCFVLTLFALVTFW) form a helical membrane-spanning segment. At 259–270 (AEPTRFGYPERP) the chain is on the cytoplasmic side. A helical membrane pass occupies residues 271–291 (VLFLCLCYNLFSVCYLERIVF). Topologically, residues 292 to 321 (HNQARMHDVELQGRLMRPGCLLTPPCLASY) are extracellular. A helical transmembrane segment spans residues 322-342 (ITTSYLSLCAASWWLIFALCF). The Cytoplasmic portion of the chain corresponds to 343-359 (YLSSHKKWSSEALEKRS). A helical transmembrane segment spans residues 360–380 (GLFHVLAWVPPLAPPIAALLL). At 381–393 (EKVRPSELTGMCY) the chain is on the extracellular side. Residues 394–414 (APGFVELPALVLLLLGLYFTL) traverse the membrane as a helical segment. The Cytoplasmic segment spans residues 415-442 (RASRSLLSLQQQLQPTLAHHRFGQIRKR). Residues 443-463 (FVLFSLLYFAPTTAGVVAALC) traverse the membrane as a helical segment. Topologically, residues 464 to 488 (ERYADSVPSCSTPDDCLSPTPLSAW) are extracellular. A helical transmembrane segment spans residues 489-509 (PALVRIFFQLVGGTLTGLWVW). Residues 510–581 (SRKTCESYRN…PVYNPNQSRV (72 aa)) are Cytoplasmic-facing. A PDZ-binding motif is present at residues 579-581 (SRV).

It belongs to the G-protein coupled receptor Fz/Smo family. As to expression, wing, leg and eye imaginal disks. In embryos, expressed is seen in brain, proventriculus, Malpighian tubules, anal plate and visceral mesoderm of parasegment 8.

The protein resides in the membrane. Receptor for Wnt proteins. Most of frizzled receptors are coupled to the beta-catenin canonical signaling pathway, which leads to the activation of disheveled proteins, inhibition of GSK-3 kinase, nuclear accumulation of beta-catenin and activation of Wnt target genes. A second signaling pathway involving PKC and calcium fluxes has been seen for some family members, but it is not yet clear if it represents a distinct pathway or if it can be integrated in the canonical pathway, as PKC seems to be required for Wnt-mediated inactivation of GSK-3 kinase. Both pathways seem to involve interactions with G-proteins. Required to coordinate the cytoskeletons of epidermal cells to produce a parallel array of cuticular hairs and bristles. The protein is Frizzled-3 (fz3) of Drosophila melanogaster (Fruit fly).